An 81-amino-acid polypeptide reads, in one-letter code: Large ribosomal subunit protein bL31B (81 aa).

It belongs to the bacterial ribosomal protein bL31 family. Type B subfamily. Part of the 50S ribosomal subunit.

The sequence is that of Large ribosomal subunit protein bL31B from Bdellovibrio bacteriovorus (strain ATCC 15356 / DSM 50701 / NCIMB 9529 / HD100).